A 254-amino-acid chain; its full sequence is Persulfide dioxygenase ETHE1, mitochondrial (254 aa).

A mitochondrion-targeting transit peptide spans 1–7; sequence MAGSVLK. Phosphoserine is present on residues Ser-14 and Ser-19. Lys-32 is subject to N6-acetyllysine; alternate. At Lys-32 the chain carries N6-succinyllysine; alternate. An N6-acetyllysine modification is found at Lys-66. Residues His-79, His-135, and Asp-154 each contribute to the Fe cation site.

It belongs to the metallo-beta-lactamase superfamily. Glyoxalase II family. In terms of assembly, homodimer. Monomer. Interacts with TST. May interact with RELA. Fe(2+) is required as a cofactor.

The protein resides in the cytoplasm. Its subcellular location is the nucleus. The protein localises to the mitochondrion matrix. The enzyme catalyses S-sulfanylglutathione + O2 + H2O = sulfite + glutathione + 2 H(+). Its activity is regulated as follows. Glutathione increases enzyme activity. In terms of biological role, sulfur dioxygenase that plays an essential role in hydrogen sulfide catabolism in the mitochondrial matrix. Hydrogen sulfide (H(2)S) is first oxidized by SQRDL, giving rise to cysteine persulfide residues. ETHE1 consumes molecular oxygen to catalyze the oxidation of the persulfide, once it has been transferred to a thiophilic acceptor, such as glutathione (R-SSH). Plays an important role in metabolic homeostasis in mitochondria by metabolizing hydrogen sulfide and preventing the accumulation of supraphysiological H(2)S levels that have toxic effects, due to the inhibition of cytochrome c oxidase. First described as a protein that can shuttle between the nucleus and the cytoplasm and suppress p53-induced apoptosis by sequestering the transcription factor RELA/NFKB3 in the cytoplasm and preventing its accumulation in the nucleus. This is Persulfide dioxygenase ETHE1, mitochondrial (ETHE1) from Bos taurus (Bovine).